The chain runs to 169 residues: Allophycocyanin subunit beta-18 (169 aa).

Asparagine 72 bears the N4-methylasparagine mark. Residue cysteine 82 coordinates (2R,3E)-phycocyanobilin.

This sequence belongs to the phycobiliprotein family. As to quaternary structure, heterodimer of an alpha and a beta chain. In terms of processing, contains one covalently linked bilin chromophore.

It is found in the plastid. The protein localises to the chloroplast thylakoid membrane. Light-harvesting photosynthetic bile pigment-protein from the phycobiliprotein complex. Allophycocyanin has a maximum absorption at approximately 650 nanometers. The sequence is that of Allophycocyanin subunit beta-18 (apcF) from Porphyra purpurea (Red seaweed).